Here is a 218-residue protein sequence, read N- to C-terminus: UPF0301 protein RPB_4502 (218 aa).

Residues 1–26 (MVTKSKRPKSGDRSGREPGNAGPIEQ) form a disordered region.

The protein belongs to the UPF0301 (AlgH) family.

This Rhodopseudomonas palustris (strain HaA2) protein is UPF0301 protein RPB_4502.